Here is a 602-residue protein sequence, read N- to C-terminus: Elongation factor 4 (602 aa).

One can recognise a tr-type G domain in the interval 7–188 (ENIRNFSIIA…SIIRLVPPPK (182 aa)). Residues 19 to 24 (DHGKST) and 135 to 138 (NKID) each bind GTP.

It belongs to the TRAFAC class translation factor GTPase superfamily. Classic translation factor GTPase family. LepA subfamily.

The protein resides in the cell inner membrane. The catalysed reaction is GTP + H2O = GDP + phosphate + H(+). In terms of biological role, required for accurate and efficient protein synthesis under certain stress conditions. May act as a fidelity factor of the translation reaction, by catalyzing a one-codon backward translocation of tRNAs on improperly translocated ribosomes. Back-translocation proceeds from a post-translocation (POST) complex to a pre-translocation (PRE) complex, thus giving elongation factor G a second chance to translocate the tRNAs correctly. Binds to ribosomes in a GTP-dependent manner. The polypeptide is Elongation factor 4 (Chlamydia trachomatis serovar A (strain ATCC VR-571B / DSM 19440 / HAR-13)).